Consider the following 367-residue polypeptide: Molybdopterin synthase catalytic subunit (367 aa).

Substrate contacts are provided by residues 101-102 (HR), K117, and 124-126 (KKE). The tract at residues 325–350 (RHFTKREPSSMEAAPPKKSRKKSYSA) is disordered.

The protein belongs to the MoaE family. MOCS2B subfamily. As to quaternary structure, heterotetramer; composed of 2 small (Mocs2A) and 2 large (Mocs2B) subunits. Component of the Ada2a-containing (ATAC) complex composed of at least Ada2a, Atac1, Hcf, Ada3, Gcn5, Mocs2B, Charac-14, Atac3, Atac2, NC2beta and wds.

It localises to the cytoplasm. The protein localises to the nucleus. It carries out the reaction 2 [molybdopterin-synthase sulfur-carrier protein]-C-terminal-Gly-aminoethanethioate + cyclic pyranopterin phosphate + H2O = molybdopterin + 2 [molybdopterin-synthase sulfur-carrier protein]-C-terminal Gly-Gly + 2 H(+). It functions in the pathway cofactor biosynthesis; molybdopterin biosynthesis. In terms of biological role, catalytic subunit of the molybdopterin synthase complex, a complex that catalyzes the conversion of precursor Z into molybdopterin. Acts by mediating the incorporation of 2 sulfur atoms from thiocarboxylated Mocs2A into precursor Z to generate a dithiolene group. Involved during biosynthesis of the molybdenum cofactor. This Drosophila melanogaster (Fruit fly) protein is Molybdopterin synthase catalytic subunit.